Reading from the N-terminus, the 546-residue chain is ATP synthase subunit alpha (546 aa).

173–180 contacts ATP; the sequence is GDRQTGKT. The segment at 520–546 is disordered; sequence VDKKTAPKSVTPVDQEQIKAGKAQEKK. The span at 535 to 546 shows a compositional bias: basic and acidic residues; it reads EQIKAGKAQEKK.

The protein belongs to the ATPase alpha/beta chains family. In terms of assembly, F-type ATPases have 2 components, CF(1) - the catalytic core - and CF(0) - the membrane proton channel. CF(1) has five subunits: alpha(3), beta(3), gamma(1), delta(1), epsilon(1). CF(0) has three main subunits: a(1), b(2) and c(9-12). The alpha and beta chains form an alternating ring which encloses part of the gamma chain. CF(1) is attached to CF(0) by a central stalk formed by the gamma and epsilon chains, while a peripheral stalk is formed by the delta and b chains.

Its subcellular location is the cell membrane. It catalyses the reaction ATP + H2O + 4 H(+)(in) = ADP + phosphate + 5 H(+)(out). In terms of biological role, produces ATP from ADP in the presence of a proton gradient across the membrane. The alpha chain is a regulatory subunit. This chain is ATP synthase subunit alpha, found in Bifidobacterium animalis subsp. lactis (strain AD011).